The primary structure comprises 102 residues: uncharacterized protein (102 aa).

3 consecutive transmembrane segments (helical) span residues 1-21 (MVPLILLILLFSKFSTFLRPV), 42-62 (SIIDVTYTMHVFYMTIILILV), and 68-88 (SIHAFLGSLCLPSHVLDFSIV).

Its subcellular location is the membrane. This is an uncharacterized protein from Saccharomyces cerevisiae (strain ATCC 204508 / S288c) (Baker's yeast).